The following is a 174-amino-acid chain: Putative FAS1 domain-containing protein 096L (174 aa).

In terms of domain architecture, FAS1 spans 36 to 171; it reads PDTLWSKLNE…GIIHLMEEVY (136 aa).

This is Putative FAS1 domain-containing protein 096L from Acheta domesticus (House cricket).